We begin with the raw amino-acid sequence, 580 residues long: Probable glucomannan 4-beta-mannosyltransferase 2 (580 aa).

A compositionally biased stretch (polar residues) spans methionine 1–arginine 12. The tract at residues methionine 1 to leucine 33 is disordered. The segment covering leucine 15–threonine 27 has biased composition (low complexity). The chain crosses the membrane as a helical span at residues alanine 85–leucine 105. Aspartate 182 is an active-site residue. Substrate-binding residues include aspartate 241 and aspartate 243. Aspartate 335 is a catalytic residue. The next 4 membrane-spanning stretches (helical) occupy residues alanine 414–valine 434, valine 437–isoleucine 457, isoleucine 528–valine 548, and tyrosine 554–glycine 574.

The protein belongs to the glycosyltransferase 2 family. Plant cellulose synthase-like A subfamily.

It is found in the golgi apparatus membrane. The catalysed reaction is GDP-mannose + (glucomannan)n = GDP + (glucomannan)n+1.. In terms of biological role, probable mannan synthase which consists of a 4-beta-mannosyltransferase activity on mannan using GDP-mannose. The beta-1,4-mannan product is the backbone for galactomannan synthesis by galactomannan galactosyltransferase. Galactomannan is a noncellulosic polysaccharides of plant cell wall. This is Probable glucomannan 4-beta-mannosyltransferase 2 from Oryza sativa subsp. japonica (Rice).